The following is a 431-amino-acid chain: Cleavage stimulation factor subunit 1 (431 aa).

Residues 14 to 35 (LYKLIISQLLYDGYISIANGLI) are hydrophobic. 6 WD repeats span residues 106-145 (SHKG…AKSA), 171-210 (DHVD…AKRA), 215-254 (QEAE…CFVS), 260-301 (QHTD…TTFE), 303-343 (AHDG…TLVR), and 395-430 (GHNN…RSTT).

In terms of assembly, homodimer. The CSTF complex is composed of CSTF1 (50 kDa subunit), CSTF2 (64 kDa subunit) and CSTF3 (77 kDa subunit). Interacts (via repeats WD) directly with CSTF3. Interacts (via repeat WD6) with BARD1. Interacts with ERCC6. The N-terminus is blocked.

The protein localises to the nucleus. Its function is as follows. One of the multiple factors required for polyadenylation and 3'-end cleavage of mammalian pre-mRNAs. May be responsible for the interaction of CSTF with other factors to form a stable complex on the pre-mRNA. This is Cleavage stimulation factor subunit 1 (CSTF1) from Homo sapiens (Human).